A 120-amino-acid polypeptide reads, in one-letter code: UPF0344 protein LMHCC_0278 (120 aa).

The next 4 helical transmembrane spans lie at 3–23 (GYIH…ALLI), 33–53 (MLQM…IMMV), 62–82 (ILAI…EMLL), and 92–112 (GMFL…GFYL).

Belongs to the UPF0344 family.

Its subcellular location is the cell membrane. This chain is UPF0344 protein LMHCC_0278, found in Listeria monocytogenes serotype 4a (strain HCC23).